A 400-amino-acid chain; its full sequence is MLLTVLAVVGCFTAVNGHGYLTIPASRTRLGFETGIDTCPECSILEPVTAWPDLEAAQVGRSGPCGYNARVSVDYNQPSEYWGNEPVVTYTSGEVVEVQWCVDANGDHGGMFTYGICQNQTLVDKFLTPGYLPTNEEKQAAEDCFLDGELKCKDVSGQTCGYNPDCTEGAACWRNDWFTCNAFQANTARACQGVDGASLNSCKTTIAGGYTVTKRIKIPDYSSDHTLLRFRWNSFQTAQVYLHCADIAIAGSGGGTTSKSTTSTTSTTSTSRSTSTSAPTTTSSASTATPICTTQASLIPVTFQEFVTTMWGENVFVTGSISQLGSWSTDKAVALSATGYTASNPLWTTTIDLPAGTTFEYKFIKKETDGSIIWESDPNRSYTVPTGCSGTTATAAASWR.

The first 17 residues, 1 to 17 (MLLTVLAVVGCFTAVNG), serve as a signal peptide directing secretion. A Cu(2+)-binding site is contributed by His-18. His-18 carries the methylhistidine modification. In terms of domain architecture, Chitin-binding type-4 spans 18–247 (HGYLTIPASR…AQVYLHCADI (230 aa)). Cystine bridges form between Cys-39–Cys-42, Cys-65–Cys-244, Cys-101–Cys-202, Cys-117–Cys-144, Cys-152–Cys-160, Cys-166–Cys-172, and Cys-180–Cys-191. His-108 is a binding site for Cu(2+). N-linked (GlcNAc...) asparagine glycosylation occurs at Asn-119. Tyr-241 serves as a coordination point for Cu(2+). The interval 254-287 (GGTTSKSTTSTTSTTSTSRSTSTSAPTTTSSAST) is disordered. Low complexity predominate over residues 257-287 (TSKSTTSTTSTTSTSRSTSTSAPTTTSSAST). Positions 293–400 (TTQASLIPVT…TTATAAASWR (108 aa)) constitute a CBM20 domain. An N-linked (GlcNAc...) asparagine glycan is attached at Asn-379.

It belongs to the polysaccharide monooxygenase AA13 family. Cu(2+) is required as a cofactor. Post-translationally, O-mannosylated.

Its subcellular location is the secreted. The enzyme catalyses starch + reduced acceptor + O2 = D-glucono-1,5-lactone-terminated malto-oligosaccharides + short-chain malto-oligosaccharides + acceptor + H2O.. With respect to regulation, activity is inhibited by both beta-cyclodextrin or amylose that block the access to the active site. Starch-active lytic polysaccharide monooxygenase that oxidizes the C1 position of starch substrates. Catalysis by LPMOs requires the reduction of the active-site copper from Cu(II) to Cu(I) by a reducing agent and H(2)O(2) or O(2) as a cosubstrate. The chain is AA13 family lytic polysaccharide monooxygenase A from Aspergillus terreus (strain NIH 2624 / FGSC A1156).